The sequence spans 317 residues: Melanocyte-stimulating hormone receptor (317 aa).

Residues 1-37 (MSVQGPQRRLLGSLNSTSPAAPRLGLAANQTGPRCLE) are Extracellular-facing. N-linked (GlcNAc...) asparagine glycosylation is found at Asn15 and Asn29. Residues 38-63 (VSVPDGLFLSLGLVSVVENVLVVAAI) form a helical membrane-spanning segment. Residues 64–72 (AKNRNLHSP) lie on the Cytoplasmic side of the membrane. The helical transmembrane segment at 73–93 (MYYFICCLAVSDLLVSVSSVL) threads the bilayer. The Extracellular segment spans residues 94-118 (ETAVMLLLEAGTLAGRAAVVQQLDD). Residues 119-140 (VIDVLVCGAMVSSLCFLGAIAV) form a helical membrane-spanning segment. The Cytoplasmic portion of the chain corresponds to 141 to 163 (DRYISIFYALRYHSIVTLPRAWR). The chain crosses the membrane as a helical span at residues 164 to 183 (AISAIWVASVLSSTLFIAYY). At 184-191 (DHTAVLLC) the chain is on the extracellular side. Residues 192–211 (LVSFFVAMLVLMAVLYVHML) form a helical membrane-spanning segment. The Cytoplasmic portion of the chain corresponds to 212–240 (ARACQHARGIARLHKRQRPVHQGLGLKGA). The chain crosses the membrane as a helical span at residues 241–266 (ATLTILLGIFFLCWGPFFLHLSLMVL). The Extracellular segment spans residues 267-279 (CPRHPICGCVFKN). A helical transmembrane segment spans residues 280–300 (FNLFLTLIICNSIVDPLIYAF). Topologically, residues 301 to 317 (RSQELRKTLQEVLLCSW) are cytoplasmic. Cys315 carries S-palmitoyl cysteine lipidation.

The protein belongs to the G-protein coupled receptor 1 family. As to quaternary structure, interacts with MGRN1, but does not undergo MGRN1-mediated ubiquitination; this interaction competes with GNAS-binding and thus inhibits agonist-induced cAMP production. Interacts with OPN3; the interaction results in a decrease in MC1R-mediated cAMP signaling and ultimately a decrease in melanin production in melanocytes.

The protein resides in the cell membrane. Receptor for MSH (alpha, beta and gamma) and ACTH. The activity of this receptor is mediated by G proteins which activate adenylate cyclase. Mediates melanogenesis, the production of eumelanin (black/brown) and phaeomelanin (red/yellow), via regulation of cAMP signaling in melanocytes. This chain is Melanocyte-stimulating hormone receptor (MC1R), found in Panthera onca (Jaguar).